We begin with the raw amino-acid sequence, 192 residues long: Shikimate kinase (192 aa).

Residue Gly27–Thr32 coordinates ATP. Thr31 contacts Mg(2+). Asp49, Arg73, and Gly95 together coordinate substrate. Residue Arg133 coordinates ATP. Arg152 is a binding site for substrate.

It belongs to the shikimate kinase family. In terms of assembly, monomer. The cofactor is Mg(2+).

It localises to the cytoplasm. It catalyses the reaction shikimate + ATP = 3-phosphoshikimate + ADP + H(+). It functions in the pathway metabolic intermediate biosynthesis; chorismate biosynthesis; chorismate from D-erythrose 4-phosphate and phosphoenolpyruvate: step 5/7. Its function is as follows. Catalyzes the specific phosphorylation of the 3-hydroxyl group of shikimic acid using ATP as a cosubstrate. This is Shikimate kinase from Hahella chejuensis (strain KCTC 2396).